Here is a 493-residue protein sequence, read N- to C-terminus: MSKRAKKRDKLMVEIVQVYSASRDEEQVTDLKKTDYLPYLFNLVMPKQFYKSPNRIVMARLYPDVQKHDEQAAEYFEGFQTPCFDLPTNLFPEKAPIDKIVFMPKVMLPMGFEAGGVFGPGVLPRRCYPVDLISPDHKGPMPPLFVGLRGMNVSLSSMINTFLGMYDSSDGQEPHVYEMHATNHHYKNDLAPEELMLRPDFTLSVAYTLPASMCLPSPYPYPSVPAQDNIYTPDLSKVLILMPHQFNITVAILSTVNNPHDPSVAFATMGDDEDCPEFELPSDVFPICEGVNRPIFLPKRFMPKGFDACCVFKPGSLSELWYIKSIGRFGNPQDQYNCFITPPLFVGKYTRNAASINMLEEISVHFDQKDREIAKSLARLRLDALRLNSRNNTTKGFLVMESDKPTTPAGAYSVESYEKASEDGCIAKVTQECATKSTDTRDDGMNTADYQSQFPELEQDSEPEPEPEPEPQTEDEGEDEDIEILASLCSGSI.

The tract at residues 434–493 (ATKSTDTRDDGMNTADYQSQFPELEQDSEPEPEPEPEPQTEDEGEDEDIEILASLCSGSI) is disordered. Residues 457–483 (LEQDSEPEPEPEPEPQTEDEGEDEDIE) show a composition bias toward acidic residues.

This sequence belongs to the DM7 family.

The protein is DM7 family protein GM11958 of Drosophila sechellia (Fruit fly).